Here is a 179-residue protein sequence, read N- to C-terminus: tRNA-splicing endonuclease (179 aa).

Catalysis depends on residues tyrosine 115, histidine 123, and lysine 154.

It belongs to the tRNA-intron endonuclease family. Archaeal short subfamily. Homotetramer; although the tetramer contains four active sites, only two participate in the cleavage. Therefore, it should be considered as a dimer of dimers.

The enzyme catalyses pretRNA = a 3'-half-tRNA molecule with a 5'-OH end + a 5'-half-tRNA molecule with a 2',3'-cyclic phosphate end + an intron with a 2',3'-cyclic phosphate and a 5'-hydroxyl terminus.. In terms of biological role, endonuclease that removes tRNA introns. Cleaves pre-tRNA at the 5'- and 3'-splice sites to release the intron. The products are an intron and two tRNA half-molecules bearing 2',3' cyclic phosphate and 5'-OH termini. Recognizes a pseudosymmetric substrate in which 2 bulged loops of 3 bases are separated by a stem of 4 bp. The chain is tRNA-splicing endonuclease from Methanopyrus kandleri (strain AV19 / DSM 6324 / JCM 9639 / NBRC 100938).